The sequence spans 1000 residues: Integrin alpha-PS5 (1000 aa).

FG-GAP repeat units follow at residues 15–74 (KHLK…GSCS), 75–137 (HYVL…DTPP), 145–198 (SLIP…AAQG), 199–261 (SYAV…GEIV), 262–323 (RKLH…FKFE), 324–379 (KKII…GLRD), and 386–448 (DAPS…SESR). A glycan (N-linked (GlcNAc...) asparagine) is linked at asparagine 58. Asparagine 231 carries N-linked (GlcNAc...) asparagine glycosylation. 9 N-linked (GlcNAc...) asparagine glycosylation sites follow: asparagine 516, asparagine 592, asparagine 622, asparagine 732, asparagine 771, asparagine 829, asparagine 842, asparagine 853, and asparagine 922. Residues 930–950 (IWYIILSLIAGHLLLGAMTYI) traverse the membrane as a helical segment. Residues 951-1000 (LYKLRFFKRGKKEELKRLLEEHRSETKEPATDCEGNQEEINVEMHSDLEN) are Cytoplasmic-facing. Positions 971–980 (EHRSETKEPA) are enriched in basic and acidic residues. Residues 971-1000 (EHRSETKEPATDCEGNQEEINVEMHSDLEN) are disordered.

This sequence belongs to the integrin alpha chain family. In terms of assembly, heterodimer of an alpha and a beta subunit. Alpha-PS5 associates with beta-PS. As to expression, expressed in all follicle cells overlying the oocyte during mid-oogenesis, the strongest expression is observed in the cells covering the anterior end of the oocyte and in the cells forming the dorsal appendages. After completion of oocyte enlargement, expression in main body follicle cells is down-regulated but persists strongly in the dorsal appendage forming cells. Expressed in lamellocytes.

The protein resides in the membrane. In terms of biological role, possible role in cell-cell interactions. Minor involvement in the establishment of the oocyte anterior-posterior length. The polypeptide is Integrin alpha-PS5 (Drosophila melanogaster (Fruit fly)).